The chain runs to 526 residues: MSKTSNKSSADSKNDAKAEDIVNGENQIATNESQSSDSAAVSERVVEPKTTVQKKFRIESDLLGELQIPSHAYYGVHTLRAVDNFQISRTTINHVPDFIRGMVQVKKAAALANRRLHTLPAQKAEAIVWACDQILIEERCMDQFPIDVFQGGAGTSLNMNTNEVVANLALEFLGHEKGEYHILHPMDDVNMSQSTNDSYPTGFRLGIYAGLQTLIAEIDELQVAFRHKGNEFVDIIKMGRTQLQDAVPMSLGEEFRAFAHNLAEEQTVLREAANRLLEVNLGATAIGTGVNTPAGYRHQVVAALSEVTGLELKSARDLIEATSDTGAYVHAHSAIKRAAMKLSKICNDLRLLSSGPRAGLNEINLPPRQAGSSIMPAKVNPVIPEVVNQVCFKVFGNDLTVTMAAEAGQLQLNVMEPVIGESLFQSLRILGNAAKTLREKCVVGITANADVCRAYVDNSIGIITYLNPFLGHDIGDQIGKEAAETGRPVRELILEKKLMDEKTLEAVLSKENLMHPMFRGRLYLEN.

A disordered region spans residues 1–44 (MSKTSNKSSADSKNDAKAEDIVNGENQIATNESQSSDSAAVSER). The span at 10–20 (ADSKNDAKAED) shows a compositional bias: basic and acidic residues. The segment covering 24–39 (GENQIATNESQSSDSA) has biased composition (polar residues). The L-aspartate site is built by threonine 155, serine 194, threonine 195, asparagine 196, and threonine 241. The tract at residues 371 to 380 (GSSIMPAKVN) is SS loop. The active-site Proton acceptor is the serine 372. The L-aspartate site is built by serine 373 and lysine 378.

The protein belongs to the class-II fumarase/aspartase family. Aspartase subfamily. Homotetramer.

It carries out the reaction L-aspartate = fumarate + NH4(+). Its function is as follows. Catalyzes the reversible conversion of L-aspartate to fumarate and ammonia. This chain is Aspartate ammonia-lyase, found in Corynebacterium glutamicum (strain ATCC 13032 / DSM 20300 / JCM 1318 / BCRC 11384 / CCUG 27702 / LMG 3730 / NBRC 12168 / NCIMB 10025 / NRRL B-2784 / 534).